The sequence spans 93 residues: Small ribosomal subunit protein uS19 (93 aa).

This sequence belongs to the universal ribosomal protein uS19 family.

Protein S19 forms a complex with S13 that binds strongly to the 16S ribosomal RNA. In Symbiobacterium thermophilum (strain DSM 24528 / JCM 14929 / IAM 14863 / T), this protein is Small ribosomal subunit protein uS19.